The primary structure comprises 274 residues: Guanylyl cyclase 1 (274 aa).

As to quaternary structure, functions both as monomer and homooligomer. The cofactor is Mg(2+).

The enzyme catalyses GTP = 3',5'-cyclic GMP + diphosphate. Its pathway is nucleotide metabolism. In terms of biological role, magnesium-dependent guanylyl cyclase that catalyzes the formation of guanosine 3',5'-cyclic monophosphate (cGMP) from guanosine 5'-triphosphate (GTP). Can also use ATP as substrate with a low activity. This chain is Guanylyl cyclase 1, found in Arabidopsis thaliana (Mouse-ear cress).